The chain runs to 115 residues: T cell receptor beta variable 16 (115 aa).

The first 20 residues, 1 to 20 (MSPIFTCITILCLLAAGSPG), serve as a signal peptide directing secretion. One can recognise an Ig-like domain in the interval 21–115 (EEVAQTPKHL…SAVYFCASSQ (95 aa)). C42 and C111 form a disulfide bridge.

In terms of assembly, alpha-beta TR is a heterodimer composed of an alpha and beta chain; disulfide-linked. The alpha-beta TR is associated with the transmembrane signaling CD3 coreceptor proteins to form the TR-CD3 (TcR or TCR). The assembly of alpha-beta TR heterodimers with CD3 occurs in the endoplasmic reticulum where a single alpha-beta TR heterodimer associates with one CD3D-CD3E heterodimer, one CD3G-CD3E heterodimer and one CD247 homodimer forming a stable octameric structure. CD3D-CD3E and CD3G-CD3E heterodimers preferentially associate with TR alpha and TR beta chains, respectively. The association of the CD247 homodimer is the last step of TcR assembly in the endoplasmic reticulum and is required for transport to the cell surface.

The protein localises to the cell membrane. V region of the variable domain of T cell receptor (TR) beta chain that participates in the antigen recognition. Alpha-beta T cell receptors are antigen specific receptors which are essential to the immune response and are present on the cell surface of T lymphocytes. Recognize peptide-major histocompatibility (MH) (pMH) complexes that are displayed by antigen presenting cells (APC), a prerequisite for efficient T cell adaptive immunity against pathogens. Binding of alpha-beta TR to pMH complex initiates TR-CD3 clustering on the cell surface and intracellular activation of LCK that phosphorylates the ITAM motifs of CD3G, CD3D, CD3E and CD247 enabling the recruitment of ZAP70. In turn ZAP70 phosphorylates LAT, which recruits numerous signaling molecules to form the LAT signalosome. The LAT signalosome propagates signal branching to three major signaling pathways, the calcium, the mitogen-activated protein kinase (MAPK) kinase and the nuclear factor NF-kappa-B (NF-kB) pathways, leading to the mobilization of transcription factors that are critical for gene expression and essential for T cell growth and differentiation. The T cell repertoire is generated in the thymus, by V-(D)-J rearrangement. This repertoire is then shaped by intrathymic selection events to generate a peripheral T cell pool of self-MH restricted, non-autoaggressive T cells. Post-thymic interaction of alpha-beta TR with the pMH complexes shapes TR structural and functional avidity. This is T cell receptor beta variable 16 from Homo sapiens (Human).